The primary structure comprises 566 residues: Lamin-1 (566 aa).

The disordered stretch occupies residues Met1–Leu37. Ser2 carries the N-acetylserine modification. The tract at residues Val13–Asp47 is head. The region spanning Glu45–Leu387 is the IF rod domain. Residues His48–Val82 are coil 1A. Residues Val83–Arg94 form a linker 1 region. The interval Phe95–Glu228 is coil 1B. Residues Leu229–Gln256 form a linker 2 region. Positions Asp257–Glu385 are coil 2. The tract at residues Arg386–Met566 is tail. Residues Arg435 to Phe550 form the LTD domain. The disordered stretch occupies residues Gly528–Met566. The span at Asp541–Pro556 shows a compositional bias: polar residues. Cys563 is subject to Cysteine methyl ester. Cys563 carries S-farnesyl cysteine lipidation. A propeptide spans Ser564 to Met566 (removed in mature form).

The protein belongs to the intermediate filament family. Interacts with LEM domain proteins lem-2 and emr-1. May interact with unc-84; this interaction may be required to complete the connection between the nuclear lamina and the cytoskeleton. Ubiquitous. Expressed in all cells, except in cells undergoing spermatogenesis.

Its subcellular location is the nucleus envelope. The protein localises to the nucleus inner membrane. Major component of the nuclear lamina, a fibrous layer on the nucleoplasmic side of the inner nuclear membrane. Provides a framework for the nuclear envelope and probably also interacts with chromatin. Essential to maintain the shape and integrity of the nucleus, and for DNA replication. Involved in spatial organization of nuclear pore complexes. It is not a target for ced-3 during apoptosis, suggesting that lamin cleavage is not essential for apoptosis in C.elegans. The polypeptide is Lamin-1 (Caenorhabditis elegans).